The sequence spans 90 residues: Small ribosomal subunit protein bS20 (90 aa).

Residues 1 to 27 (MANSAQAKKRARQNEKRELHNASQRSA) form a disordered region.

Belongs to the bacterial ribosomal protein bS20 family.

In terms of biological role, binds directly to 16S ribosomal RNA. This Coxiella burnetii (strain CbuK_Q154) (Coxiella burnetii (strain Q154)) protein is Small ribosomal subunit protein bS20.